Consider the following 780-residue polypeptide: MSKVRVYEYAKEHQVSSKKVIEALKDLGIEVANHMSTINENALRQLDNAVDGTNKKAEAPKKETTSNENGNSKGPNKPNMTNSNEKSNKPNKPAGQATKPATANKSQGAKPATNKPANTSNQTQSSGNQQQAGGQKRNNNSNRPGGGNSNRPGGNNRPNRGGNFNNKGRNTKKKGKLNHSTVPPTPPKPKELPEKIVFSESLTVAELAKKLYREPSELIKKLFMLGVVATINQSLDKDAIELICDDYGVQVEEEIKVDVTDLDVYFENELNETVDESKLVERPPVVTIMGHVDHGKTTLLDSLRNTKVTLGEAGGITQHIGAYQLEIHDKKITFLDTPGHAAFTAMRARGAQITDITILVVAADDGVMPQTIEAINHAKAAGMPIIVAVNKIDKPQANPDRVMQELTEYELVPEAWGGDTIFAPISAKFGEGLENLLDMILLVSEVEELKANPNRRAIGSVIEAELDKGRGPVATLLVQDGTLNIGDPIVVGNTFGRVRAMVNDLGRRVKKVGPSTPVEITGLNDVPQAGDRFVVFEDEKTARNIGETRASRALVAQRSATNRVSLDNLFEHMKAGEMKEVNVIIKADVQGSVEALAASLRKIDVEGVNVKIIHTAVGAINESDITLAAASNAIVIGFNVRPTAQAREAAENESVDIRLHRVIYKAIDEIEAAMKGMLDPEFQEKIIGQAQVRQTINVSKVGTIAGCYVTDGKITRDSGVRIIRDGIVVFEGEIATLKRFKDDAKEVAKGYECGITVQNFNDIKEDDVIEAYVMEEIERK.

Residues 44–194 (RQLDNAVDGT…TPPKPKELPE (151 aa)) form a disordered region. Positions 53–65 (TNKKAEAPKKETT) are enriched in basic and acidic residues. The span at 66–81 (SNENGNSKGPNKPNMT) shows a compositional bias: polar residues. Composition is skewed to low complexity over residues 82–93 (NSNEKSNKPNKP) and 117–168 (ANTS…NNKG). The tr-type G domain occupies 281-450 (ERPPVVTIMG…LLVSEVEELK (170 aa)). Residues 290–297 (GHVDHGKT) form a G1 region. 290-297 (GHVDHGKT) serves as a coordination point for GTP. Positions 315–319 (GITQH) are G2. The tract at residues 336 to 339 (DTPG) is G3. Residues 336 to 340 (DTPGH) and 390 to 393 (NKID) contribute to the GTP site. The segment at 390 to 393 (NKID) is G4. Residues 426-428 (SAK) are G5.

This sequence belongs to the TRAFAC class translation factor GTPase superfamily. Classic translation factor GTPase family. IF-2 subfamily.

It is found in the cytoplasm. One of the essential components for the initiation of protein synthesis. Protects formylmethionyl-tRNA from spontaneous hydrolysis and promotes its binding to the 30S ribosomal subunits. Also involved in the hydrolysis of GTP during the formation of the 70S ribosomal complex. The protein is Translation initiation factor IF-2 of Listeria welshimeri serovar 6b (strain ATCC 35897 / DSM 20650 / CCUG 15529 / CIP 8149 / NCTC 11857 / SLCC 5334 / V8).